A 600-amino-acid chain; its full sequence is Elongation factor 4 (600 aa).

Residues 5 to 187 enclose the tr-type G domain; that stretch reads KYIRNFSIIA…AIVSKLPPPK (183 aa). Residues 17–22 and 134–137 each bind GTP; these read DHGKST and NKLD.

Belongs to the TRAFAC class translation factor GTPase superfamily. Classic translation factor GTPase family. LepA subfamily.

The protein resides in the cell inner membrane. The catalysed reaction is GTP + H2O = GDP + phosphate + H(+). Required for accurate and efficient protein synthesis under certain stress conditions. May act as a fidelity factor of the translation reaction, by catalyzing a one-codon backward translocation of tRNAs on improperly translocated ribosomes. Back-translocation proceeds from a post-translocation (POST) complex to a pre-translocation (PRE) complex, thus giving elongation factor G a second chance to translocate the tRNAs correctly. Binds to ribosomes in a GTP-dependent manner. The chain is Elongation factor 4 from Rickettsia rickettsii (strain Iowa).